The primary structure comprises 53 residues: uncharacterized protein (53 aa).

The segment covering 1-10 has biased composition (polar residues); sequence MHILTRSSKN. The segment at 1 to 25 is disordered; that stretch reads MHILTRSSKNAFPRSRSRQDIHISS.

This is an uncharacterized protein from Saccharomyces cerevisiae (strain ATCC 204508 / S288c) (Baker's yeast).